The sequence spans 187 residues: Elongation factor P (187 aa).

This sequence belongs to the elongation factor P family.

The protein localises to the cytoplasm. The protein operates within protein biosynthesis; polypeptide chain elongation. In terms of biological role, involved in peptide bond synthesis. Stimulates efficient translation and peptide-bond synthesis on native or reconstituted 70S ribosomes in vitro. Probably functions indirectly by altering the affinity of the ribosome for aminoacyl-tRNA, thus increasing their reactivity as acceptors for peptidyl transferase. The chain is Elongation factor P from Nocardia farcinica (strain IFM 10152).